Here is a 130-residue protein sequence, read N- to C-terminus: S-protein homolog 32 (130 aa).

Positions 1–21 (MKYFTIFVFVFSLCMLGHVSG) are cleaved as a signal peptide.

The protein belongs to the plant self-incompatibility (S1) protein family.

It is found in the secreted. This chain is S-protein homolog 32, found in Arabidopsis thaliana (Mouse-ear cress).